Consider the following 616-residue polypeptide: Cytochrome c oxidase subunit 1 (616 aa).

The helical transmembrane segment at His-28–Ile-48 threads the bilayer. Residue His-72 coordinates Fe(II)-heme a. A run of 6 helical transmembrane segments spans residues Thr-75–Leu-95, Val-102–Leu-122, Gly-158–Ile-178, Phe-198–Met-218, Leu-243–Phe-263, and Leu-275–Val-295. 2 residues coordinate Cu cation: His-249 and Tyr-253. Residues His-249–Tyr-253 constitute a cross-link (1'-histidyl-3'-tyrosine (His-Tyr)). His-298 and His-299 together coordinate Cu cation. Transmembrane regions (helical) follow at residues Val-303–Pro-323, Ala-349–Ala-369, Phe-380–Gly-400, Ile-420–Gly-440, Ile-463–Val-483, Ser-553–Tyr-573, and Ala-577–Leu-597. Fe(II)-heme o is bound at residue His-384. His-384 serves as a coordination point for heme a3. Residue His-386 coordinates Fe(II)-heme a.

This sequence belongs to the heme-copper respiratory oxidase family. Requires Cu(2+) as cofactor. The cofactor is heme.

Its subcellular location is the cell membrane. The enzyme catalyses 4 Fe(II)-[cytochrome c] + O2 + 8 H(+)(in) = 4 Fe(III)-[cytochrome c] + 2 H2O + 4 H(+)(out). Its pathway is energy metabolism; oxidative phosphorylation. Functionally, cytochrome c oxidase is the component of the respiratory chain that catalyzes the reduction of oxygen to water. Subunits 1-3 form the functional core of the enzyme complex. Co I is the catalytic subunit of the enzyme. Electrons originating in cytochrome c are transferred via the copper A center of subunit 2 and heme a of subunit 1 to the bimetallic center formed by heme a3 and copper B. This cytochrome c oxidase shows proton pump activity across the membrane in addition to the electron transfer. The protein is Cytochrome c oxidase subunit 1 (ctaD) of Bacillus sp. (strain PS3).